The chain runs to 702 residues: Amino-acid racemase (702 aa).

Over 1–12 (MKHRANGIDLFR) the chain is Cytoplasmic. A helical membrane pass occupies residues 13–33 (IFAATMVVAIHTFPFQSIAPF). Topologically, residues 34–39 (LDEVIT) are extracellular. A helical membrane pass occupies residues 40-60 (LTVFRVAVPFFFMITGYFLLG). The Cytoplasmic segment spans residues 61–77 (RLSLNFSYNNNQRVKKY). Residues 78 to 98 (LYKIGMIYLYSILLYFPLSLL) traverse the membrane as a helical segment. At 99 to 120 (NGTISLKMNILLLLKVFIFDGT) the chain is on the extracellular side. The helical transmembrane segment at 121–141 (FYHLWYFPASIIGTILVTLLL) threads the bilayer. Residue Arg-142 is a topological domain, cytoplasmic. The helical transmembrane segment at 143-163 (SIGFKLTVAFSTCLYLVGLGG) threads the bilayer. At 164–191 (DSWYGITNQVPLLNKLYTFIFSWSDYTR) the chain is on the extracellular side. Residues 192-212 (SGVFFTPVFLCLGIFAYRVSK) form a helical membrane-spanning segment. Topologically, residues 213-218 (KLTASK) are cytoplasmic. A helical membrane pass occupies residues 219-239 (ILNLLFYVFIIGMTFESIFLH). Residues 240–248 (RFTNVKHDS) lie on the Extracellular side of the membrane. The helical transmembrane segment at 249 to 269 (MYLLLPSCALILFLMLLNWQP) threads the bilayer. At 270–276 (KLKVKES) the chain is on the cytoplasmic side. Residues 277 to 297 (ADLTLLVYILHPLVIVIVHSI) traverse the membrane as a helical segment. Over 298 to 307 (SKYIPILKNS) the chain is Extracellular. A helical membrane pass occupies residues 308-328 (LLNFLLVVVCSFILAQLLLNL). At 329 to 702 (KRKLRVSKQK…LGSRLGTELN (374 aa)) the chain is on the cytoplasmic side. The racemase stretch occupies residues 337–702 (QKIPFERASK…LGSRLGTELN (366 aa)). Residue Lys-375 is the Proton acceptor of the active site. N6-(pyridoxal phosphate)lysine is present on Lys-375. Arg-469 contacts substrate. Tyr-601 functions as the Proton acceptor in the catalytic mechanism. Met-650 contributes to the substrate binding site.

This sequence in the N-terminal section; belongs to the acyltransferase 3 family. In the C-terminal section; belongs to the alanine racemase family. Requires pyridoxal 5'-phosphate as cofactor.

It localises to the cell membrane. The polypeptide is Amino-acid racemase (vanTE) (Enterococcus faecalis (Streptococcus faecalis)).